The following is a 188-amino-acid chain: uncharacterized protein (188 aa).

This is an uncharacterized protein from Methanocaldococcus jannaschii (strain ATCC 43067 / DSM 2661 / JAL-1 / JCM 10045 / NBRC 100440) (Methanococcus jannaschii).